The chain runs to 1127 residues: Myelin transcription factor 1 (1127 aa).

Disordered regions lie at residues 1 to 157 (MSSE…KSSY) and 204 to 369 (MGVN…TDES). The CCHHC-type 1 zinc finger occupies 21 to 64 (PETTGADLSCPTPGCTGSGHVRGKYSRHRSLQSCPLAKKRKLED). C30, C35, H48, and C54 together coordinate Zn(2+). Residues 41–50 (VRGKYSRHRS) show a composition bias toward basic residues. 2 stretches are compositionally biased toward basic and acidic residues: residues 61–71 (KLEDAETEHLV) and 82–103 (ALDE…KDVS). Residues 104 to 117 (VSDESEGPLEEAEA) are compositionally biased toward acidic residues. Over residues 143–157 (SNPTSSPSGFSKSSY) the composition is skewed to low complexity. Residues 244 to 259 (MVSEESSKQKGVLGHE) are compositionally biased toward basic and acidic residues. Residues 260–308 (EEGEEEEEDEEEEDEEEEEEGEEGEEEEEEEEEEEEEEDEEEEEEEEEA) show a composition bias toward acidic residues. Residues 348–360 (VRSDDDKDEDSRS) show a composition bias toward basic and acidic residues. 2 CCHHC-type zinc fingers span residues 435 to 478 (SRVE…PPEI) and 479 to 522 (LAMH…KLAK). Zn(2+) contacts are provided by C444, C449, H462, C468, C488, C493, H506, and C512. 2 disordered regions span residues 520–542 (LAKS…SNSD) and 670–776 (TLDL…EERK). Residues 528-542 (QLQTGDPPKNNSNSD) show a composition bias toward polar residues. Residues 703-725 (SQRQSSTSAPSSSMTSPQSSQAS) are compositionally biased toward low complexity. Basic and acidic residues predominate over residues 726-735 (RQDEWDRPLD). Residues 761–772 (EADDQEVSEENF) show a composition bias toward acidic residues. 4 consecutive CCHHC-type zinc fingers follow at residues 793 to 836 (KDIK…LRNL), 837 to 880 (MAAH…GLKV), 886 to 929 (DKED…QKEG), and 939 to 982 (KSLK…GKKG). Zn(2+) contacts are provided by C802, C807, H820, C826, C846, C851, H864, C870, C895, C900, H913, C919, C948, C953, H966, and C972.

Belongs to the MYT1 family. In terms of assembly, interacts with STEAP3. Isoform 1 is more predominant than isoform 2 at all stages of development and adulthood. Expressed in differentiated neurons especially at higher levels in newly generated ones.

The protein resides in the nucleus. Binds to the promoter region of genes encoding proteolipid proteins of the central nervous system. May play a role in the development of neurons and oligodendroglia in the CNS. May regulate a critical transition point in oligodendrocyte lineage development by modulating oligodendrocyte progenitor proliferation relative to terminal differentiation and up-regulation of myelin gene transcription. In Mus musculus (Mouse), this protein is Myelin transcription factor 1 (Myt1).